Reading from the N-terminus, the 95-residue chain is Protein TusB (95 aa).

This sequence belongs to the DsrH/TusB family. In terms of assembly, heterohexamer, formed by a dimer of trimers. The hexameric TusBCD complex contains 2 copies each of TusB, TusC and TusD. The TusBCD complex interacts with TusE.

The protein localises to the cytoplasm. Its function is as follows. Part of a sulfur-relay system required for 2-thiolation of 5-methylaminomethyl-2-thiouridine (mnm(5)s(2)U) at tRNA wobble positions. The chain is Protein TusB from Klebsiella pneumoniae subsp. pneumoniae (strain ATCC 700721 / MGH 78578).